The chain runs to 227 residues: Ion-translocating oxidoreductase complex subunit E (227 aa).

Helical transmembrane passes span 18-38 (ALVQ…VTNA), 39-59 (LGLG…VSLV), 69-89 (IPVF…LMNA), 93-113 (GLYL…IIIG), 125-145 (LPAV…LVLL), and 182-202 (HFLL…LIAL).

Belongs to the NqrDE/RnfAE family. The complex is composed of six subunits: RnfA, RnfB, RnfC, RnfD, RnfE and RnfG.

Its subcellular location is the cell inner membrane. In terms of biological role, part of a membrane-bound complex that couples electron transfer with translocation of ions across the membrane. The sequence is that of Ion-translocating oxidoreductase complex subunit E from Aliivibrio fischeri (strain ATCC 700601 / ES114) (Vibrio fischeri).